The primary structure comprises 471 residues: Glutamate--tRNA ligase (471 aa).

The 'HIGH' region signature appears at Pro-9 to Gly-19. Residues Cys-98, Cys-100, Cys-125, and His-127 each coordinate Zn(2+). A 'KMSKS' region motif is present at residues Lys-237–Arg-241. Lys-240 contributes to the ATP binding site.

Belongs to the class-I aminoacyl-tRNA synthetase family. Glutamate--tRNA ligase type 1 subfamily. Monomer. Zn(2+) is required as a cofactor.

It is found in the cytoplasm. It carries out the reaction tRNA(Glu) + L-glutamate + ATP = L-glutamyl-tRNA(Glu) + AMP + diphosphate. Its function is as follows. Catalyzes the attachment of glutamate to tRNA(Glu) in a two-step reaction: glutamate is first activated by ATP to form Glu-AMP and then transferred to the acceptor end of tRNA(Glu). In Cronobacter sakazakii (strain ATCC BAA-894) (Enterobacter sakazakii), this protein is Glutamate--tRNA ligase.